The sequence spans 94 residues: Late cornified envelope protein 3C (94 aa).

Residues 1 to 10 (MSCQQNQQQC) are compositionally biased toward low complexity. 2 disordered regions span residues 1–35 (MSCQQNQQQCQPPPSCPSPKCPPKSPAQCLPPPSS) and 65–94 (CRRQRSNSCDRGSGQQGGGSCRGHGSGGCC). Residues 11–34 (QPPPSCPSPKCPPKSPAQCLPPPS) show a composition bias toward pro residues. Gly residues predominate over residues 78–94 (GQQGGGSCRGHGSGGCC).

It belongs to the LCE family. Interacts with CYSRT1; the interaction is direct. Skin-specific. Expression was readily detected in adult trunk skin, adult arm skin, fetal skin, penal skin, vulva, esophagus and tongue. Not expressed in the cervix, rectum, lung, colon, or placenta.

A structural component of the cornified envelope of the stratum corneum involved in innate cutaneous host defense. Possesses defensin-like antimicrobial activity against a broad spectrum of Gram-positive and Gram-negative bacteria, both aerobic and anaerobic species. Upon inflammation, may regulate skin barrier repair by shaping cutaneous microbiota composition and immune response to bacterial antigens. This is Late cornified envelope protein 3C from Homo sapiens (Human).